A 159-amino-acid chain; its full sequence is Ribosomal RNA large subunit methyltransferase H (159 aa).

S-adenosyl-L-methionine-binding positions include leucine 76, glycine 108, and 127-132 (FSKMTF).

The protein belongs to the RNA methyltransferase RlmH family. As to quaternary structure, homodimer.

The protein localises to the cytoplasm. It carries out the reaction pseudouridine(1915) in 23S rRNA + S-adenosyl-L-methionine = N(3)-methylpseudouridine(1915) in 23S rRNA + S-adenosyl-L-homocysteine + H(+). In terms of biological role, specifically methylates the pseudouridine at position 1915 (m3Psi1915) in 23S rRNA. This chain is Ribosomal RNA large subunit methyltransferase H, found in Staphylococcus aureus (strain Mu3 / ATCC 700698).